Here is a 102-residue protein sequence, read N- to C-terminus: MSDQATTLKIKPLGDRILVKREEEASTARGGIILPDTAKKKQDRAEVLALGTGKKDDKGQQLPFEVQVGDIVLIDKYSGQELTVEGEEYVIVQMSEVIAVLQ.

It belongs to the GroES chaperonin family. Heptamer of 7 subunits arranged in a ring. Interacts with the chaperonin GroEL.

The protein localises to the cytoplasm. Together with the chaperonin GroEL, plays an essential role in assisting protein folding. The GroEL-GroES system forms a nano-cage that allows encapsulation of the non-native substrate proteins and provides a physical environment optimized to promote and accelerate protein folding. GroES binds to the apical surface of the GroEL ring, thereby capping the opening of the GroEL channel. The sequence is that of Co-chaperonin GroES from Chlamydia muridarum (strain MoPn / Nigg).